The following is a 308-amino-acid chain: Follistatin-related protein 1 (308 aa).

The signal sequence occupies residues 1–20; that stretch reads MWKRWLALALALVAVAWVRA. A Follistatin-like domain is found at 30-53; it reads ICANVFCGAGRECAVTEKGEPTCL. Intrachain disulfides connect C31-C42, C36-C52, C54-C84, C58-C77, and C66-C98. In terms of domain architecture, Kazal-like spans 48–100; sequence GEPTCLCIEQCKPHKRPVCGSNGKTYLNHCELHRDACLTGSKIQVDYDGHCKE. N-linked (GlcNAc...) asparagine glycosylation occurs at N144. Positions 144–178 constitute an EF-hand 1 domain; sequence NYSEILDKYFKNFDNGDSRLDSSEFLKFVEQNETA. The residue at position 165 (S165) is a Phosphoserine. Residues N175 and N180 are each glycosylated (N-linked (GlcNAc...) asparagine). The EF-hand 2 domain occupies 193-228; it reads LRGLCVDALIELSDENADWKLSFQEFLKCLNPSFNP. A VWFC domain is found at 233 to 287; the sequence is CALEDETYADGAETEVDCNRCVCACGNWVCTAMTCDGKNQKGAQTQTEEEMTRYV.

As to quaternary structure, homodimer. Interacts with SCN10A. Interacts with DIP2A; DIP2A may act as a cell surface receptor for FSTL1. Interacts with BMP4. Interacts with CD14; this interaction promotes TL4-mediated signaling cascade.

Its subcellular location is the secreted. In terms of biological role, secreted glycoprotein that is involved in various physiological processes, such as angiogenesis, regulation of the immune response, cell proliferation and differentiation. Plays a role in the development of the central nervous system, skeletal system, lungs, and ureter. Promotes endothelial cell survival, migration and differentiation into network structures in an AKT-dependent manner. Also promotes survival of cardiac myocytes. Initiates various signaling cascades by activating different receptors on the cell surface such as DIP2A, TLR4 or BMP receptors. In Macaca fascicularis (Crab-eating macaque), this protein is Follistatin-related protein 1 (FSTL1).